A 502-amino-acid chain; its full sequence is Myocilin (502 aa).

The N-terminal stretch at M1 to A31 is a signal peptide. Residues A82–Q183 are a coiled coil. The interval A166–S198 is disordered. N229 carries N-linked (GlcNAc...) asparagine glycosylation. Positions G242 to E501 constitute an Olfactomedin-like domain. A disulfide bond links C243 and C431. Residues D378, N426, A427, V475, and D476 each coordinate Ca(2+).

As to quaternary structure, homodimer (via N-terminus). Can also form higher oligomers. Interacts with OLFM3, FN1, NRCAM, GLDN and NFASC. Interacts (via N-terminus) with MYL2. Interacts with SFRP1, FRZB, FZD7, FZD10, FZD1 and WIF1; regulates Wnt signaling. Interacts with SNTA1; regulates muscle hypertrophy. Interacts with ERBB2 and ERBB3; activates ERBB2-ERBB3 signaling pathway. Interacts with SNCG; affects its secretion and its aggregation. Post-translationally, palmitoylated. Undergoes a calcium-dependent proteolytic cleavage at Gln-225 by CAPN2 in the endoplasmic reticulum. The result is the production of two fragments, one of 35 kDa containing the C-terminal olfactomedin-like domain, and another of 20 kDa containing the N-terminal leucine zipper-like domain. In terms of processing, glycosylated. As to expression, highly expressed in skeletal muscle and retina. Also detected at lower levels in thyroid gland but not in other endocrine glands such as the adrenal or pituitary glands.

It localises to the secreted. Its subcellular location is the golgi apparatus. It is found in the cytoplasmic vesicle. The protein localises to the extracellular space. The protein resides in the extracellular matrix. It localises to the extracellular exosome. Its subcellular location is the mitochondrion. It is found in the mitochondrion intermembrane space. The protein localises to the mitochondrion inner membrane. The protein resides in the mitochondrion outer membrane. It localises to the rough endoplasmic reticulum. Its subcellular location is the cell projection. It is found in the cilium. The protein localises to the endoplasmic reticulum. Functionally, secreted glycoprotein regulating the activation of different signaling pathways in adjacent cells to control different processes including cell adhesion, cell-matrix adhesion, cytoskeleton organization and cell migration. Promotes substrate adhesion, spreading and formation of focal contacts. Negatively regulates cell-matrix adhesion and stress fiber assembly through Rho protein signal transduction. Modulates the organization of actin cytoskeleton by stimulating the formation of stress fibers through interactions with components of Wnt signaling pathways. Promotes cell migration through activation of PTK2 and the downstream phosphatidylinositol 3-kinase signaling. Plays a role in bone formation and promotes osteoblast differentiation in a dose-dependent manner through mitogen-activated protein kinase signaling. Mediates myelination in the peripheral nervous system through ERBB2/ERBB3 signaling. Plays a role as a regulator of muscle hypertrophy through the components of dystrophin-associated protein complex. Involved in positive regulation of mitochondrial depolarization. Plays a role in neurite outgrowth. May participate in the obstruction of fluid outflow in the trabecular meshwork. The sequence is that of Myocilin (Myoc) from Rattus norvegicus (Rat).